The chain runs to 426 residues: Histidine--tRNA ligase (426 aa).

It belongs to the class-II aminoacyl-tRNA synthetase family. In terms of assembly, homodimer.

The protein localises to the cytoplasm. The enzyme catalyses tRNA(His) + L-histidine + ATP = L-histidyl-tRNA(His) + AMP + diphosphate + H(+). This is Histidine--tRNA ligase (hisS) from Streptococcus dysgalactiae subsp. equisimilis (Streptococcus equisimilis).